The sequence spans 553 residues: Urocanate hydratase (553 aa).

Residues 45 to 46 (GG), Q123, 169 to 171 (GMG), D189, R194, 235 to 236 (NA), 256 to 260 (QTSAH), 266 to 267 (YV), Y315, and G485 each bind NAD(+).

Belongs to the urocanase family. NAD(+) is required as a cofactor.

The protein resides in the cytoplasm. The enzyme catalyses 4-imidazolone-5-propanoate = trans-urocanate + H2O. The protein operates within amino-acid degradation; L-histidine degradation into L-glutamate; N-formimidoyl-L-glutamate from L-histidine: step 2/3. Catalyzes the conversion of urocanate to 4-imidazolone-5-propionate. This Staphylococcus aureus (strain Mu50 / ATCC 700699) protein is Urocanate hydratase.